The sequence spans 792 residues: Ribonucleoside-diphosphate reductase large subunit (792 aa).

Substrate is bound by residues Thr-200, Ser-215–Cys-216, Gly-246, Asn-415–Glu-419, and Pro-606–Thr-610. A disulfide bridge connects residues Cys-216 and Cys-431. The Proton acceptor role is filled by Asn-415. Catalysis depends on Cys-417, which acts as the Cysteine radical intermediate. Glu-419 (proton acceptor) is an active-site residue. The tract at residues Ser-758–Ser-781 is disordered.

It belongs to the ribonucleoside diphosphate reductase large chain family. In terms of assembly, heterotetramer composed of a homodimer of the large subunit (R1) and a homodimer of the small subunit (R2). Larger multisubunit protein complex are also active, composed of (R1)n(R2)n.

The enzyme catalyses a 2'-deoxyribonucleoside 5'-diphosphate + [thioredoxin]-disulfide + H2O = a ribonucleoside 5'-diphosphate + [thioredoxin]-dithiol. In terms of biological role, ribonucleoside-diphosphate reductase holoenzyme provides the precursors necessary for viral DNA synthesis. Allows virus growth in non-dividing cells, as well as reactivation from latency in infected hosts. Catalyzes the biosynthesis of deoxyribonucleotides from the corresponding ribonucleotides. The protein is Ribonucleoside-diphosphate reductase large subunit of Human herpesvirus 8 type P (isolate GK18) (HHV-8).